The sequence spans 360 residues: UDP-N-acetylglucosamine--N-acetylmuramyl-(pentapeptide) pyrophosphoryl-undecaprenol N-acetylglucosamine transferase (360 aa).

UDP-N-acetyl-alpha-D-glucosamine is bound by residues threonine 11 to glycine 13, asparagine 120, arginine 161, serine 188, and glutamine 282.

It belongs to the glycosyltransferase 28 family. MurG subfamily.

The protein localises to the cell inner membrane. It catalyses the reaction di-trans,octa-cis-undecaprenyl diphospho-N-acetyl-alpha-D-muramoyl-L-alanyl-D-glutamyl-meso-2,6-diaminopimeloyl-D-alanyl-D-alanine + UDP-N-acetyl-alpha-D-glucosamine = di-trans,octa-cis-undecaprenyl diphospho-[N-acetyl-alpha-D-glucosaminyl-(1-&gt;4)]-N-acetyl-alpha-D-muramoyl-L-alanyl-D-glutamyl-meso-2,6-diaminopimeloyl-D-alanyl-D-alanine + UDP + H(+). It participates in cell wall biogenesis; peptidoglycan biosynthesis. In terms of biological role, cell wall formation. Catalyzes the transfer of a GlcNAc subunit on undecaprenyl-pyrophosphoryl-MurNAc-pentapeptide (lipid intermediate I) to form undecaprenyl-pyrophosphoryl-MurNAc-(pentapeptide)GlcNAc (lipid intermediate II). The sequence is that of UDP-N-acetylglucosamine--N-acetylmuramyl-(pentapeptide) pyrophosphoryl-undecaprenol N-acetylglucosamine transferase from Synechococcus sp. (strain RCC307).